Consider the following 294-residue polypeptide: Pyridoxal 5'-phosphate synthase subunit PdxS (294 aa).

D24 is a D-ribose 5-phosphate binding site. Residue K81 is the Schiff-base intermediate with D-ribose 5-phosphate of the active site. D-ribose 5-phosphate is bound at residue G153. R165 is a D-glyceraldehyde 3-phosphate binding site. Residues G214 and 235-236 (GS) each bind D-ribose 5-phosphate.

The protein belongs to the PdxS/SNZ family. In the presence of PdxT, forms a dodecamer of heterodimers.

It carries out the reaction aldehydo-D-ribose 5-phosphate + D-glyceraldehyde 3-phosphate + L-glutamine = pyridoxal 5'-phosphate + L-glutamate + phosphate + 3 H2O + H(+). The protein operates within cofactor biosynthesis; pyridoxal 5'-phosphate biosynthesis. In terms of biological role, catalyzes the formation of pyridoxal 5'-phosphate from ribose 5-phosphate (RBP), glyceraldehyde 3-phosphate (G3P) and ammonia. The ammonia is provided by the PdxT subunit. Can also use ribulose 5-phosphate and dihydroxyacetone phosphate as substrates, resulting from enzyme-catalyzed isomerization of RBP and G3P, respectively. In Bacillus licheniformis (strain ATCC 14580 / DSM 13 / JCM 2505 / CCUG 7422 / NBRC 12200 / NCIMB 9375 / NCTC 10341 / NRRL NRS-1264 / Gibson 46), this protein is Pyridoxal 5'-phosphate synthase subunit PdxS.